The chain runs to 102 residues: Small ribosomal subunit protein bS18c (102 aa).

The segment covering 1–19 (MDKTKRPLRKSKRSFRRRL) has biased composition (basic residues). The segment at 1 to 26 (MDKTKRPLRKSKRSFRRRLPPPIGSG) is disordered.

Belongs to the bacterial ribosomal protein bS18 family. Part of the 30S ribosomal subunit.

Its subcellular location is the plastid. The protein resides in the chloroplast. The protein is Small ribosomal subunit protein bS18c of Piper cenocladum (Ant piper).